Here is a 764-residue protein sequence, read N- to C-terminus: 5-methyltetrahydropteroyltriglutamate--homocysteine methyltransferase (764 aa).

Residues 17-20 (RELK) and Lys117 contribute to the 5-methyltetrahydropteroyltri-L-glutamate site. L-homocysteine-binding positions include 437–439 (IGS) and Glu490. L-methionine is bound by residues 437–439 (IGS) and Glu490. 5-methyltetrahydropteroyltri-L-glutamate contacts are provided by residues 521-522 (RC) and Trp567. L-homocysteine is bound at residue Asp605. Asp605 serves as a coordination point for L-methionine. Glu611 contacts 5-methyltetrahydropteroyltri-L-glutamate. Zn(2+) is bound by residues His647, Cys649, and Glu671. The Proton donor role is filled by His701. Residue Cys733 participates in Zn(2+) binding.

The protein belongs to the vitamin-B12 independent methionine synthase family. The cofactor is Zn(2+).

It catalyses the reaction 5-methyltetrahydropteroyltri-L-glutamate + L-homocysteine = tetrahydropteroyltri-L-glutamate + L-methionine. The protein operates within amino-acid biosynthesis; L-methionine biosynthesis via de novo pathway; L-methionine from L-homocysteine (MetE route): step 1/1. In terms of biological role, catalyzes the transfer of a methyl group from 5-methyltetrahydrofolate to homocysteine resulting in methionine formation. The polypeptide is 5-methyltetrahydropteroyltriglutamate--homocysteine methyltransferase (Blochmanniella pennsylvanica (strain BPEN)).